The sequence spans 99 residues: Protein adenylyltransferase MntA (99 aa).

The short motif at 33–47 (GSYVRGEAKEDSDVD) is the GSX(10)DXD motif element. Catalysis depends on residues D45 and D47. Residues D45, D47, and D77 each contribute to the Mg(2+) site.

Belongs to the MntA antitoxin family. The cofactor is Mg(2+).

The catalysed reaction is L-tyrosyl-[protein] + ATP = O-(5'-adenylyl)-L-tyrosyl-[protein] + diphosphate. It carries out the reaction O-(5'-adenylyl)-L-tyrosyl-[protein] + ATP = O-[5'-(adenylyl-(5'-&gt;3')-adenylyl)]-L-tyrosyl-[protein] + diphosphate. Its function is as follows. Antitoxin component of a type VII toxin-antitoxin (TA) system. Overexpression in E.coli neutralizes the toxic effect of cognate toxin HepT. Neutralization is mostly due to AMPylation of the toxin by this enzyme. The protein is Protein adenylyltransferase MntA of Thermococcus cleftensis (strain DSM 27260 / KACC 17922 / CL1).